The following is an 86-amino-acid chain: MKKDIHPDYRPVVFLDTTTGYKFLSGSTKSTKETVEFEGETYPLIRVEISSDSHPFYTGRQKFTQADGRVDRFNKKYGLKDANAAQ.

The protein belongs to the bacterial ribosomal protein bL31 family. Type B subfamily. As to quaternary structure, part of the 50S ribosomal subunit.

In Streptococcus agalactiae serotype III (strain NEM316), this protein is Large ribosomal subunit protein bL31B.